Here is a 1088-residue protein sequence, read N- to C-terminus: DNA ligase 4 (1088 aa).

Disordered regions lie at residues 1-56 (MALS…KFND) and 73-117 (TTTT…TTTT). Composition is skewed to low complexity over residues 25 to 53 (DFKN…YNNK) and 73 to 90 (TTTT…INKT). The segment covering 95–105 (DDIFDDEDEDS) has biased composition (acidic residues). Residues Glu414, Lys416, Arg421, Glu467, Phe514, Glu574, Lys579, Lys596, and Lys598 each coordinate ATP. Lys416 functions as the N6-AMP-lysine intermediate in the catalytic mechanism. Glu467 is a binding site for Mg(2+). Mg(2+) is bound at residue Glu574. BRCT domains follow at residues 827 to 917 (PTQN…PKYM) and 984 to 1088 (CWWS…EILD).

This sequence belongs to the ATP-dependent DNA ligase family. Mg(2+) serves as cofactor.

It localises to the nucleus. It catalyses the reaction ATP + (deoxyribonucleotide)n-3'-hydroxyl + 5'-phospho-(deoxyribonucleotide)m = (deoxyribonucleotide)n+m + AMP + diphosphate.. DNA ligase involved in DNA non-homologous end joining (NHEJ); required for double-strand break (DSB) repair. This is DNA ligase 4 (lig4) from Dictyostelium discoideum (Social amoeba).